A 525-amino-acid polypeptide reads, in one-letter code: Acetyl-CoA hydrolase (525 aa).

280 to 284 is a CoA binding site; it reads GIGNI. The active-site 5-glutamyl coenzyme A thioester intermediate is E305. CoA is bound by residues N395 and G399.

The protein belongs to the acetyl-CoA hydrolase/transferase family.

It localises to the cytoplasm. It carries out the reaction acetyl-CoA + H2O = acetate + CoA + H(+). Required for utilization of acetate. The sequence is that of Acetyl-CoA hydrolase (acu-8) from Neurospora crassa (strain ATCC 24698 / 74-OR23-1A / CBS 708.71 / DSM 1257 / FGSC 987).